A 388-amino-acid polypeptide reads, in one-letter code: L-cysteine desulfidase (388 aa).

The Proton acceptor role is filled by Cys25. The [4Fe-4S] cluster site is built by Cys282, Cys322, and Cys329.

This sequence belongs to the L-cysteine desulfidase family. As to quaternary structure, homotrimer. The cofactor is [4Fe-4S] cluster.

It carries out the reaction L-cysteine + H2O = hydrogen sulfide + pyruvate + NH4(+) + H(+). Its function is as follows. Catalyzes the cleavage of L-cysteine to form 2-aminoprop-2-enoate and sulfide. The former then spontaneously hydrolyzes to pyruvate and NH(3). May be responsible for the production of sulfide required for the biosynthesis of iron-sulfur centers in this archaea. Is very specific for L-cysteine, with no activity being detected with D-cysteine, L-homocysteine, 3-mercaptopropionate (cysteine without the amino group), cysteamine (cysteine without the carboxylate), or mercaptolactate (the hydroxyl analog of cysteine). The protein is L-cysteine desulfidase of Methanocaldococcus jannaschii (strain ATCC 43067 / DSM 2661 / JAL-1 / JCM 10045 / NBRC 100440) (Methanococcus jannaschii).